A 421-amino-acid chain; its full sequence is Gamma-glutamyl phosphate reductase (421 aa).

Belongs to the gamma-glutamyl phosphate reductase family.

It localises to the cytoplasm. It catalyses the reaction L-glutamate 5-semialdehyde + phosphate + NADP(+) = L-glutamyl 5-phosphate + NADPH + H(+). It functions in the pathway amino-acid biosynthesis; L-proline biosynthesis; L-glutamate 5-semialdehyde from L-glutamate: step 2/2. Catalyzes the NADPH-dependent reduction of L-glutamate 5-phosphate into L-glutamate 5-semialdehyde and phosphate. The product spontaneously undergoes cyclization to form 1-pyrroline-5-carboxylate. The sequence is that of Gamma-glutamyl phosphate reductase from Pseudomonas fluorescens (strain SBW25).